Consider the following 243-residue polypeptide: tRNA (guanine-N(1)-)-methyltransferase (243 aa).

S-adenosyl-L-methionine is bound by residues Gly113 and 133 to 138 (IGDFVL).

This sequence belongs to the RNA methyltransferase TrmD family. In terms of assembly, homodimer.

The protein localises to the cytoplasm. The catalysed reaction is guanosine(37) in tRNA + S-adenosyl-L-methionine = N(1)-methylguanosine(37) in tRNA + S-adenosyl-L-homocysteine + H(+). Specifically methylates guanosine-37 in various tRNAs. The protein is tRNA (guanine-N(1)-)-methyltransferase of Bacillus licheniformis (strain ATCC 14580 / DSM 13 / JCM 2505 / CCUG 7422 / NBRC 12200 / NCIMB 9375 / NCTC 10341 / NRRL NRS-1264 / Gibson 46).